The sequence spans 236 residues: Flagellar L-ring protein (236 aa).

The N-terminal stretch at 1-16 (MRMRITAILAAGLLAG) is a signal peptide. Cys-17 carries N-palmitoyl cysteine lipidation. Cys-17 carries the S-diacylglycerol cysteine lipid modification. The tract at residues 96–143 (ENETDRSRKNSSGFNLGASGESQTSDFAWSGDLEYGSNTKTEGDGKTE) is disordered. Residues 105–122 (NSSGFNLGASGESQTSDF) show a composition bias toward polar residues.

This sequence belongs to the FlgH family. In terms of assembly, the basal body constitutes a major portion of the flagellar organelle and consists of four rings (L,P,S, and M) mounted on a central rod.

It localises to the cell outer membrane. Its subcellular location is the bacterial flagellum basal body. Functionally, assembles around the rod to form the L-ring and probably protects the motor/basal body from shearing forces during rotation. In Sinorhizobium medicae (strain WSM419) (Ensifer medicae), this protein is Flagellar L-ring protein.